Reading from the N-terminus, the 333-residue chain is Eukaryotic translation initiation factor 2 subunit 2 (333 aa).

Disordered regions lie at residues 1–119 (MSGD…DLDI) and 139–164 (ILEK…NQTG). An N-acetylserine modification is found at serine 2. 2 positions are modified to phosphoserine: serine 2 and serine 13. The span at 13–22 (SKKKKKKKKP) shows a compositional bias: basic residues. Phosphothreonine occurs at positions 31 and 36. Residues 40–51 (ETKEVEPEPTED) are compositionally biased toward basic and acidic residues. A Phosphoserine modification is found at serine 67. A compositionally biased stretch (basic and acidic residues) spans 96–105 (EGVKDLKIES). A Glycyl lysine isopeptide (Lys-Gly) (interchain with G-Cter in SUMO2) cross-link involves residue lysine 102. Serine 105 carries the post-translational modification Phosphoserine. Acidic residues-rich tracts occupy residues 106–118 (DVQE…DDLD) and 139–149 (ILEKDEALEDE). Threonine 111 carries the post-translational modification Phosphothreonine. 2 positions are modified to phosphoserine: serine 158 and serine 218. Residues lysine 265 and lysine 293 each carry the N6-acetyllysine modification. The C4-type zinc-finger motif lies at 281 to 305 (CHTCRSPDTILQKDTRLYFLQCETC).

The protein belongs to the eIF-2-beta/eIF-5 family. As to quaternary structure, eukaryotic translation initiation factor 2 eIF2 is a heterotrimeric complex composed of an alpha (EIF2S1), a beta (EIF2S2) and a gamma (EIF2S3) chain. eIF2 is member of the 43S pre-initiation complex (43S PIC). eIF2 forms a complex with at least CELF1/CUGBP1, CALR, CALR3, EIF2S1, EIF2S2, HSP90B1 and HSPA5. Interacts with BZW2/5MP1. Interacts with EIF5.

Its subcellular location is the cytoplasm. The protein localises to the cytosol. Its function is as follows. Component of the eIF2 complex that functions in the early steps of protein synthesis by forming a ternary complex with GTP and initiator tRNA. This complex binds to a 40S ribosomal subunit, followed by mRNA binding to form the 43S pre-initiation complex (43S PIC). Junction of the 60S ribosomal subunit to form the 80S initiation complex is preceded by hydrolysis of the GTP bound to eIF2 and release of an eIF2-GDP binary complex. In order for eIF2 to recycle and catalyze another round of initiation, the GDP bound to eIF2 must exchange with GTP by way of a reaction catalyzed by eIF2B. In Pongo abelii (Sumatran orangutan), this protein is Eukaryotic translation initiation factor 2 subunit 2 (EIF2S2).